We begin with the raw amino-acid sequence, 167 residues long: MTAGTVVITGGILATVILLCIIAVLCYCRLQYYCCKKDESEEDEEEPDFAVHSHLPPLHSNRNLVLTNGPALYPAATTSFSQKSPQARALCRSCSHYEPPTFFLQEPEDEDFEGVRNGGGRVAYKSISQEDVELPSASFGGLQALNPNRLSAMREAFSRSRSVSTDV.

The helical transmembrane segment at V6 to C26 threads the bilayer. S40 carries the phosphoserine modification.

The protein belongs to the FAM163 family.

Its subcellular location is the membrane. The chain is Protein FAM163B (Fam163b) from Mus musculus (Mouse).